The sequence spans 343 residues: Selenide, water dikinase (343 aa).

Selenocysteine 15 is an active-site residue. Residue selenocysteine 15 is a non-standard amino acid, selenocysteine. Residues lysine 18 and 45–47 each bind ATP; that span reads TAD. Aspartate 48 contacts Mg(2+). ATP-binding positions include aspartate 65, aspartate 88, and 135 to 137; that span reads GHT. Aspartate 88 serves as a coordination point for Mg(2+). Aspartate 223 serves as a coordination point for Mg(2+).

The protein belongs to the selenophosphate synthase 1 family. Class I subfamily. In terms of assembly, homodimer. It depends on Mg(2+) as a cofactor.

The catalysed reaction is hydrogenselenide + ATP + H2O = selenophosphate + AMP + phosphate + 2 H(+). Synthesizes selenophosphate from selenide and ATP. The sequence is that of Selenide, water dikinase from Carboxydothermus hydrogenoformans (strain ATCC BAA-161 / DSM 6008 / Z-2901).